The chain runs to 48 residues: Large ribosomal subunit protein bL33A (48 aa).

This sequence belongs to the bacterial ribosomal protein bL33 family.

The sequence is that of Large ribosomal subunit protein bL33A from Limosilactobacillus fermentum (strain NBRC 3956 / LMG 18251) (Lactobacillus fermentum).